The following is a 341-amino-acid chain: 2-keto-4-carboxy-3-hexenedioate hydratase (341 aa).

Positions 8 and 10 each coordinate Zn(2+). 71–73 (RAS) contacts substrate. A Zn(2+)-binding site is contributed by H178. Positions 194 and 223 each coordinate substrate. E284 serves as the catalytic Proton donor/acceptor. R290 provides a ligand contact to substrate.

It belongs to the metallo-dependent hydrolases superfamily. In terms of assembly, homodimer. It depends on Zn(2+) as a cofactor.

The catalysed reaction is (3Z)-2-oxo-4-carboxy-3-hexenedioate + H2O = (2S)-2-hydroxy-4-oxobutane-1,2,4-tricarboxylate. Its pathway is secondary metabolite metabolism; lignin degradation. Contributes to the degradation of lignin at the level of the protocatechuate 4,5-cleavage pathway. Catalyzes the hydration of the double bond of (3Z)-2-keto-4-carboxy-3-hexenedioate (KCH) to (4S)-4-carboxy-4-hydroxy-2-oxoadipate (CHA, also named (2S)-2-hydroxy-4-oxobutane-1,2,4-tricarboxylate). Is involved in the catabolism of both vanillate and syringate. In Sphingobium sp. (strain NBRC 103272 / SYK-6), this protein is 2-keto-4-carboxy-3-hexenedioate hydratase.